We begin with the raw amino-acid sequence, 947 residues long: Bromodomain testis-specific protein (947 aa).

Residues 27–133 (RLTNQLQYLQ…KLFMQKLSQM (107 aa)) enclose the Bromo 1 domain. Asn109 contacts JQ1. A Phosphoserine modification is found at Ser187. The interval 202-228 (QTAAQVTKGVKRKADTTTPATSAVKAS) is disordered. Positions 209-220 (KGVKRKADTTTP) match the Nuclear localization signal motif. Residues 217 to 228 (TTTPATSAVKAS) show a composition bias toward polar residues. The 110-residue stretch at 267 to 376 (VKVTEQLRHC…DVFETHFSKI (110 aa)) folds into the Bromo 2 domain. Disordered stretches follow at residues 395 to 420 (ETTG…DERV), 444 to 511 (PFRK…KPMN), 610 to 698 (NNQL…IPPE), and 882 to 924 (NKCS…RRRE). Residues 417–470 (DERVKRLAKLQEQLKAVHQQLQVLSQVPFRKLNKKKEKSKKEKKKEKVNNSNEN) adopt a coiled-coil conformation. Positions 447 to 462 (KLNKKKEKSKKEKKKE) are enriched in basic residues. Over residues 470-481 (NPRKMCEQMRLK) the composition is skewed to basic and acidic residues. Basic residues predominate over residues 482-494 (EKSKRNQPKKRKQ). In terms of domain architecture, NET spans 500-582 (KSEDEDNAKP…ACLRKRPLKP (83 aa)). Positions 591–621 (KEELHSQKKQELEKRLLDVNNQLNSRKRQTK) form a coiled coil. The span at 637-662 (LSESSSSSSSSSESESSSSDLSSSDS) shows a compositional bias: low complexity. 2 stretches are compositionally biased toward basic and acidic residues: residues 674–692 (TEVK…KMKN) and 885–924 (SGEE…RRRE).

It belongs to the BET family. As to quaternary structure, interacts with mRNA splicing machinery proteins SRSF2, DDX5, HNRNPK and TARDBP. Interacts with the acetylated N-terminus of histone H1, H2, H3 and H4. Interacts with P-TEFb components CDK9 and CCNT1/cyclin-T1. Interacts with SMARCE1. Interacts with the acetylated N-terminus of histone H1.4, H2A, H2B, H3 and H4. Post-translationally, ubiquitinated in a SPOP-dependent manner, leading to proteasomal degradation. In terms of tissue distribution, testis-specific. A 3-fold higher expression is seen in adult testis than in embryo testis. Expression seems to be correlated with histone H4 hyperacetylation during the haploid phase of spermatogenesis (spermiogenesis). No expression, or very low expression is seen in patients' testes with abnormal spermatogenesis. Expressed in cancers such as non-small cell lung cancer and squamous cell carcinomas of the head and neck as well as of esophagus, but not in melanoma or in cancers of the colon, breast, kidney and bladder.

It localises to the nucleus. In terms of biological role, testis-specific chromatin protein that specifically binds histone H4 acetylated at 'Lys-5' and 'Lys-8' (H4K5ac and H4K8ac, respectively) and plays a key role in spermatogenesis. Required in late pachytene spermatocytes: plays a role in meiotic and post-meiotic cells by binding to acetylated histones at the promoter of specific meiotic and post-meiotic genes, facilitating their activation at the appropriate time. In the post-meiotic phase of spermatogenesis, binds to hyperacetylated histones and participates in their general removal from DNA. Also recognizes and binds a subset of butyrylated histones: able to bind histone H4 butyrylated at 'Lys-8' (H4K8ac), while it is not able to bind H4 butyrylated at 'Lys-5' (H4K5ac). Also acts as a component of the splicing machinery in pachytene spermatocytes and round spermatids and participates in 3'-UTR truncation of specific mRNAs in post-meiotic spermatids. Required for chromocenter organization, a structure comprised of peri-centromeric heterochromatin. In Homo sapiens (Human), this protein is Bromodomain testis-specific protein (BRDT).